The sequence spans 1273 residues: Kinesin-like protein KIN-14A (1273 aa).

Residues 1–52 (MADQRSKTNRWNWEVSGFEPRKSSSNASFAESTGHRTTGPLLRRNSISTPSL) form a disordered region. The stretch at 59–89 (ASKVNGLKEKVKLAKEDYLELRQEATDLQEY) forms a coiled coil. The Kinesin motor domain occupies 142-456 (NIKVFCRARP…LNYAARARNT (315 aa)). Residue 223 to 230 (GQTNAGKT) participates in ATP binding. Coiled-coil stretches lie at residues 466–511 (IKKW…CVLL), 559–595 (QLDQEQKLQMQQQDSAIQNLQAKITDLESQVSEAVRS), and 627–657 (TKKLEEELKKRDALIERLHEENEKLFDRLTE). Disordered regions lie at residues 827 to 847 (KPNTGRSKSTSRGSSPGRSPV) and 1136 to 1157 (QEDTNILEQSHDRRPSLESISS). The segment covering 830-846 (TGRSKSTSRGSSPGRSP) has biased composition (low complexity).

It belongs to the TRAFAC class myosin-kinesin ATPase superfamily. Kinesin family. KIN-14 subfamily. As to quaternary structure, homodimer and heterodimer with KCA2. Interacts with CDKA-1. Interacts with AL1, a geminivirus (TGMV) protein essential for viral replication. Interacts with LUE1/KSS. Part of the phosphorylation is not CDK-dependent. In terms of tissue distribution, widely expressed.

It is found in the nucleus. The protein resides in the cytoplasm. The protein localises to the cytoskeleton. Its subcellular location is the spindle. It localises to the chromosome. It is found in the cell membrane. The protein resides in the phragmoplast. Kinesin-like protein required for chloroplast movements and anchor to the plasma membrane. Mediates chloroplast movement via chloroplast actin (cp-actin) filaments. Required for the chloroplast avoidance response under high intensity blue light. Mediates redundantly with CHUP1 the nuclear avoidance response under high intensity blue light. May act as a mitotic kinesin. Probably involved in division plane determination. In Arabidopsis thaliana (Mouse-ear cress), this protein is Kinesin-like protein KIN-14A.